The primary structure comprises 230 residues: NAD(P)H-hydrate epimerase (230 aa).

The YjeF N-terminal domain maps to 11–218 (AIDVDQELFT…ALQRKYELNL (208 aa)). (6S)-NADPHX is bound at residue 61 to 65 (NNGGD). Residues Asn62 and Asp126 each coordinate K(+). (6S)-NADPHX-binding positions include 130-136 (GFSFKPP) and Asp159. Ser162 provides a ligand contact to K(+).

This sequence belongs to the NnrE/AIBP family. Requires K(+) as cofactor.

It carries out the reaction (6R)-NADHX = (6S)-NADHX. The catalysed reaction is (6R)-NADPHX = (6S)-NADPHX. Catalyzes the epimerization of the S- and R-forms of NAD(P)HX, a damaged form of NAD(P)H that is a result of enzymatic or heat-dependent hydration. This is a prerequisite for the S-specific NAD(P)H-hydrate dehydratase to allow the repair of both epimers of NAD(P)HX. This chain is NAD(P)H-hydrate epimerase, found in Drosophila erecta (Fruit fly).